The sequence spans 171 residues: Co-chaperone protein HscB (171 aa).

The J domain occupies 2–74 (DYFTLFGLPA…LTRAEYLLSL (73 aa)).

Belongs to the HscB family. As to quaternary structure, interacts with HscA and stimulates its ATPase activity. Interacts with IscU.

In terms of biological role, co-chaperone involved in the maturation of iron-sulfur cluster-containing proteins. Seems to help targeting proteins to be folded toward HscA. The sequence is that of Co-chaperone protein HscB from Salmonella agona (strain SL483).